The primary structure comprises 115 residues: Probable 4-amino-4-deoxy-L-arabinose-phosphoundecaprenol flippase subunit ArnE (115 aa).

A run of 3 helical transmembrane segments spans residues 42-62 (PWPW…LLLL), 65-85 (VEVG…TLAA), and 93-112 (VDRR…VLLG). The EamA domain occupies 46–113 (LALLALGLGL…IVAGVVLLGR (68 aa)).

The protein belongs to the ArnE family. Heterodimer of ArnE and ArnF.

It localises to the cell inner membrane. Its pathway is bacterial outer membrane biogenesis; lipopolysaccharide biosynthesis. Functionally, translocates 4-amino-4-deoxy-L-arabinose-phosphoundecaprenol (alpha-L-Ara4N-phosphoundecaprenol) from the cytoplasmic to the periplasmic side of the inner membrane. This Pseudomonas aeruginosa (strain UCBPP-PA14) protein is Probable 4-amino-4-deoxy-L-arabinose-phosphoundecaprenol flippase subunit ArnE.